The primary structure comprises 336 residues: GTP 3',8-cyclase (336 aa).

One can recognise a Radical SAM core domain in the interval 16–241 (AYRRTYYYLR…QSKGITDGPA (226 aa)). Arg25 contributes to the GTP binding site. [4Fe-4S] cluster-binding residues include Cys32 and Cys36. Tyr38 is a binding site for S-adenosyl-L-methionine. Cys39 is a [4Fe-4S] cluster binding site. Arg75 provides a ligand contact to GTP. Gly79 lines the S-adenosyl-L-methionine pocket. Thr106 provides a ligand contact to GTP. S-adenosyl-L-methionine is bound at residue Ser130. Residue Lys167 coordinates GTP. Met201 contacts S-adenosyl-L-methionine. Residues Cys264 and Cys267 each contribute to the [4Fe-4S] cluster site. GTP is bound at residue 269–271 (RLR). Cys281 serves as a coordination point for [4Fe-4S] cluster.

Belongs to the radical SAM superfamily. MoaA family. In terms of assembly, monomer and homodimer. [4Fe-4S] cluster serves as cofactor.

The catalysed reaction is GTP + AH2 + S-adenosyl-L-methionine = (8S)-3',8-cyclo-7,8-dihydroguanosine 5'-triphosphate + 5'-deoxyadenosine + L-methionine + A + H(+). Its pathway is cofactor biosynthesis; molybdopterin biosynthesis. In terms of biological role, catalyzes the cyclization of GTP to (8S)-3',8-cyclo-7,8-dihydroguanosine 5'-triphosphate. The protein is GTP 3',8-cyclase of Actinobacillus succinogenes (strain ATCC 55618 / DSM 22257 / CCUG 43843 / 130Z).